A 191-amino-acid chain; its full sequence is Small ribosomal subunit protein uS5 (191 aa).

Residues 20 to 83 enclose the S5 DRBM domain; that stretch reads FADRLVAINR…EQAKRQMIRV (64 aa). Positions 158-191 are disordered; the sequence is TSPRMVAQRRGKKVSDILKKDGEPAEAAAEPAEA. Basic and acidic residues predominate over residues 170 to 180; sequence KVSDILKKDGE. Positions 182–191 are enriched in low complexity; that stretch reads AEAAAEPAEA.

Belongs to the universal ribosomal protein uS5 family. As to quaternary structure, part of the 30S ribosomal subunit. Contacts proteins S4 and S8.

With S4 and S12 plays an important role in translational accuracy. Its function is as follows. Located at the back of the 30S subunit body where it stabilizes the conformation of the head with respect to the body. The chain is Small ribosomal subunit protein uS5 from Dinoroseobacter shibae (strain DSM 16493 / NCIMB 14021 / DFL 12).